A 219-amino-acid polypeptide reads, in one-letter code: MPLTDTPPSVPQKPRRGRPRGAPDASLAHQSLIRAGLEHLTEKGYSSVGVDEILKAARVPKGSFYHYFRNKADFGLALIEAYDTYFARLLDQAFLDGSLAPLARLRLFTRMAEEGMARHGFRRGCLVGNLGQEMGALPDDFRAALIGVLETWQRRTAQLFREAQACGELSADHDPDALAEAFWIGWEGAILRAKLELRPDPLHSFTRTFGRHFVTRTQE.

Positions 1 to 25 (MPLTDTPPSVPQKPRRGRPRGAPDA) are disordered. Positions 26–86 (SLAHQSLIRA…ALIEAYDTYF (61 aa)) constitute an HTH tetR-type domain. The segment at residues 49–68 (GVDEILKAARVPKGSFYHYF) is a DNA-binding region (H-T-H motif).

Its function is as follows. A transcriptional repressor for its operon. Probably binds to 2 operator sequences in the promoter. This Cereibacter sphaeroides (strain ATCC 17023 / DSM 158 / JCM 6121 / CCUG 31486 / LMG 2827 / NBRC 12203 / NCIMB 8253 / ATH 2.4.1.) (Rhodobacter sphaeroides) protein is Transcriptional regulator AcuR (acuR).